Consider the following 248-residue polypeptide: Probable transcriptional regulatory protein SO_2432 (248 aa).

Belongs to the TACO1 family.

It localises to the cytoplasm. The polypeptide is Probable transcriptional regulatory protein SO_2432 (Shewanella oneidensis (strain ATCC 700550 / JCM 31522 / CIP 106686 / LMG 19005 / NCIMB 14063 / MR-1)).